A 517-amino-acid chain; its full sequence is Probable bifunctional methylthioribulose-1-phosphate dehydratase/enolase-phosphatase E1 (517 aa).

The methylthioribulose-1-phosphate dehydratase stretch occupies residues 1 to 242 (MACGGCSCEA…CIKLYQLGID (242 aa)). Cys114 provides a ligand contact to substrate. Residues His132 and His134 each coordinate Zn(2+). The active-site Proton donor/acceptor; for methylthioribulose-1-phosphate dehydratase activity is the Glu157. Residue His207 participates in Zn(2+) binding. The interval 278 to 517 (VVLDIEGTTT…FRTIKSFSEI (240 aa)) is enolase-phosphatase E1. Residues Asp281 and Glu283 each coordinate Mg(2+). Substrate is bound by residues 416-417 (SS) and Lys450. Asp476 serves as a coordination point for Mg(2+).

The protein in the N-terminal section; belongs to the aldolase class II family. MtnB subfamily. It in the C-terminal section; belongs to the HAD-like hydrolase superfamily. MasA/MtnC family. It depends on Zn(2+) as a cofactor. Requires Mg(2+) as cofactor.

It catalyses the reaction 5-(methylsulfanyl)-D-ribulose 1-phosphate = 5-methylsulfanyl-2,3-dioxopentyl phosphate + H2O. The catalysed reaction is 5-methylsulfanyl-2,3-dioxopentyl phosphate + H2O = 1,2-dihydroxy-5-(methylsulfanyl)pent-1-en-3-one + phosphate. Its pathway is amino-acid biosynthesis; L-methionine biosynthesis via salvage pathway; L-methionine from S-methyl-5-thio-alpha-D-ribose 1-phosphate: step 2/6. It functions in the pathway amino-acid biosynthesis; L-methionine biosynthesis via salvage pathway; L-methionine from S-methyl-5-thio-alpha-D-ribose 1-phosphate: step 3/6. It participates in amino-acid biosynthesis; L-methionine biosynthesis via salvage pathway; L-methionine from S-methyl-5-thio-alpha-D-ribose 1-phosphate: step 4/6. This is Probable bifunctional methylthioribulose-1-phosphate dehydratase/enolase-phosphatase E1 from Sorghum bicolor (Sorghum).